The sequence spans 1132 residues: Large proline-rich protein BAG6 (1132 aa).

N-acetylmethionine is present on Met1. One can recognise a Ubiquitin-like domain in the interval Leu17–Thr92. Disordered stretches follow at residues Arg87–Asp126 and Leu189–Ser272. Positions Pro95–Thr108 are enriched in low complexity. Phosphoserine occurs at positions 96 and 113. Thr117 bears the Phosphothreonine mark. Pro residues-rich tracts occupy residues Ser200 to Thr210 and Thr251 to Ala262. Residues Arg242–His270 form repeat 1. The interval Arg242–Met636 is 4 X 29 AA approximate repeats. At Thr350 the chain carries Phosphothreonine. Disordered regions lie at residues Val385–Pro441, Ile461–Gly528, and Pro560–Ala603. Pro residues predominate over residues Arg393–Pro407. Low complexity predominate over residues Gly408–Gly426. Copy 2 of the repeat occupies Pro415–Val443. 2 stretches are compositionally biased toward pro residues: residues Ala427–Thr438 and Pro507–Pro520. Residues Ala569–Pro586 show a composition bias toward low complexity. Repeat copies occupy residues Ser574–Met602 and Ser608–Met636. Pro residues predominate over residues Pro588–Gln599. Residues Gln651–Gly692 form a disordered region. A compositionally biased stretch (pro residues) spans Ala656–Ser680. The segment covering Pro681–Gly692 has biased composition (gly residues). 3 positions are modified to phosphoserine: Val832, Ser964, and Ser973. Residues Pro947–Pro1132 form a disordered region. Low complexity predominate over residues Ala1005–Pro1020. The tract at residues Trp1010–Asp1040 is required for interaction with GET4. Residues Ala1012–Met1054 carry the Nuclear localization site motif. Residues Ile1022–Pro1132 form a sufficient for the delivery of client proteins to the endoplasmic reticulum region. Phosphothreonine is present on Thr1053. Residues Gly1058–Asn1115 form a BAG-similar domain, required and sufficient for interaction with UBL4A region. Positions Ala1066–Ala1076 are enriched in low complexity. A phosphoserine mark is found at Ser1081 and Ser1117.

In terms of assembly, component of the BAG6/BAT3 complex, also named BAT3 complex, at least composed of BAG6, UBL4A and GET4/TRC35. Interacts with GET4; the interaction is direct and localizes BAG6 in the cytosol. Interacts with UBL4A; the interaction is direct and required for UBL4A protein stability. Interacts with AIFM1. Interacts with HSPA2. Interacts with CTCFL. Interacts with p300/EP300. Interacts (via ubiquitin-like domain) with RNF126; required for BAG6-dependent ubiquitination of proteins mislocalized to the cytosol. Interacts (via ubiquitin-like domain) with SGTA; SGTA competes with RNF126 by binding the same region of BAG6, thereby promoting deubiquitination of BAG6-target proteins and rescuing them from degradation. Interacts with ricin A chain. Interacts with VCP and AMFR; both form the VCP/p97-AMFR/gp78 complex. Interacts with SYVN1. Interacts with USP13; the interaction is direct and may mediate UBL4A deubiquitination. Interacts with ZFAND2B. Interacts with KPNA2. Interacts with UBQLN4. (Microbial infection) Interacts with L.pneumophila Lpg2160 and LegU1 proteins. In terms of processing, ricin can induce a cleavage by the caspase CASP3. The released C-terminal peptide induces apoptosis. Post-translationally, (Microbial infection) In case of infection by L.pneumophila, ubiquitinated by the SCF(LegU1) complex. As to expression, expressed by immature dendritic cells (at protein level).

Its subcellular location is the cytoplasm. It is found in the cytosol. The protein localises to the nucleus. It localises to the secreted. The protein resides in the extracellular exosome. ATP-independent molecular chaperone preventing the aggregation of misfolded and hydrophobic patches-containing proteins. Functions as part of a cytosolic protein quality control complex, the BAG6/BAT3 complex, which maintains these client proteins in a soluble state and participates in their proper delivery to the endoplasmic reticulum or alternatively can promote their sorting to the proteasome where they undergo degradation. The BAG6/BAT3 complex is involved in the post-translational delivery of tail-anchored/type II transmembrane proteins to the endoplasmic reticulum membrane. Recruited to ribosomes, it interacts with the transmembrane region of newly synthesized tail-anchored proteins and together with SGTA and ASNA1 mediates their delivery to the endoplasmic reticulum. Client proteins that cannot be properly delivered to the endoplasmic reticulum are ubiquitinated by RNF126, an E3 ubiquitin-protein ligase associated with BAG6 and are sorted to the proteasome. SGTA which prevents the recruitment of RNF126 to BAG6 may negatively regulate the ubiquitination and the proteasomal degradation of client proteins. Similarly, the BAG6/BAT3 complex also functions as a sorting platform for proteins of the secretory pathway that are mislocalized to the cytosol either delivering them to the proteasome for degradation or to the endoplasmic reticulum. The BAG6/BAT3 complex also plays a role in the endoplasmic reticulum-associated degradation (ERAD), a quality control mechanism that eliminates unwanted proteins of the endoplasmic reticulum through their retrotranslocation to the cytosol and their targeting to the proteasome. It maintains these retrotranslocated proteins in an unfolded yet soluble state condition in the cytosol to ensure their proper delivery to the proteasome. BAG6 is also required for selective ubiquitin-mediated degradation of defective nascent chain polypeptides by the proteasome. In this context, it may participate in the production of antigenic peptides and play a role in antigen presentation in immune response. BAG6 is also involved in endoplasmic reticulum stress-induced pre-emptive quality control, a mechanism that selectively attenuates the translocation of newly synthesized proteins into the endoplasmic reticulum and reroutes them to the cytosol for proteasomal degradation. BAG6 may ensure the proper degradation of these proteins and thereby protects the endoplasmic reticulum from protein overload upon stress. By inhibiting the polyubiquitination and subsequent proteasomal degradation of HSPA2 it may also play a role in the assembly of the synaptonemal complex during spermatogenesis. Also positively regulates apoptosis by interacting with and stabilizing the proapoptotic factor AIFM1. By controlling the steady-state expression of the IGF1R receptor, indirectly regulates the insulin-like growth factor receptor signaling pathway. Its function is as follows. Involved in DNA damage-induced apoptosis: following DNA damage, accumulates in the nucleus and forms a complex with p300/EP300, enhancing p300/EP300-mediated p53/TP53 acetylation leading to increase p53/TP53 transcriptional activity. When nuclear, may also act as a component of some chromatin regulator complex that regulates histone 3 'Lys-4' dimethylation (H3K4me2). In terms of biological role, released extracellularly via exosomes, it is a ligand of the natural killer/NK cells receptor NCR3 and stimulates NK cells cytotoxicity. It may thereby trigger NK cells cytotoxicity against neighboring tumor cells and immature myeloid dendritic cells (DC). Functionally, mediates ricin-induced apoptosis. This is Large proline-rich protein BAG6 from Homo sapiens (Human).